Reading from the N-terminus, the 192-residue chain is Potassium channel HX13_20290 (192 aa).

A helical membrane pass occupies residues 1–24; sequence MTKGRLEAFSDGVLAIIITIMVLE. Residues 5–11 carry the RxxxFSD motif motif; the sequence is RLEAFSD. Residue Leu-25 is a topological domain, cytoplasmic. Positions 26-29 are short helix H1; the sequence is KVPE. Over 26–39 the chain is Extracellular; it reads KVPEGSSWASLQPI. The segment at 31 to 37 is short helix H2; that stretch reads SSWASLQ. Residues 40 to 65 form a helical membrane-spanning segment; sequence LPRFLAYIFSFIYVGIYWNNHHHLFQ. Residues 66-71 lie on the Cytoplasmic side of the membrane; sequence TVKKVN. A helical membrane pass occupies residues 72-93; that stretch reads GSILWANLHLLFWLSLMPIATE. The Extracellular portion of the chain corresponds to 94-101; the sequence is WIGTSHFA. The chain crosses the membrane as a helical span at residues 102-126; that stretch reads QNPVATYGIGLIMSAIAYTILENVI. Topologically, residues 127–133 are cytoplasmic; it reads IRCEGEN. The chain crosses the membrane as a helical span at residues 134–162; that stretch reads SKLKEAIHSKFKEYISIIFYVLGIATSFF. Residues 163–164 are Extracellular-facing; it reads YP. The helical transmembrane segment at 165-180 threads the bilayer; it reads YIAIGFYYLVALIWLI. Topologically, residues 181-192 are cytoplasmic; that stretch reads PDKRIEKSLKEN.

The protein belongs to the TMEM175 family. Homotetramer.

It is found in the membrane. The catalysed reaction is K(+)(in) = K(+)(out). Functionally, potassium channel. The protein is Potassium channel HX13_20290 of Chryseobacterium sp. (strain P1-3).